Here is a 387-residue protein sequence, read N- to C-terminus: Succinate--CoA ligase [ADP-forming] subunit beta (387 aa).

The ATP-grasp domain maps to 9–244 (KQLFAEYGIP…KTQEDETEVL (236 aa)). ATP-binding positions include K46, 53 to 55 (GRG), G102, and E107. The Mg(2+) site is built by N199 and D213. Substrate-binding positions include N264 and 321–323 (GIV).

Belongs to the succinate/malate CoA ligase beta subunit family. Heterotetramer of two alpha and two beta subunits. It depends on Mg(2+) as a cofactor.

The catalysed reaction is succinate + ATP + CoA = succinyl-CoA + ADP + phosphate. It carries out the reaction GTP + succinate + CoA = succinyl-CoA + GDP + phosphate. Its pathway is carbohydrate metabolism; tricarboxylic acid cycle; succinate from succinyl-CoA (ligase route): step 1/1. In terms of biological role, succinyl-CoA synthetase functions in the citric acid cycle (TCA), coupling the hydrolysis of succinyl-CoA to the synthesis of either ATP or GTP and thus represents the only step of substrate-level phosphorylation in the TCA. The beta subunit provides nucleotide specificity of the enzyme and binds the substrate succinate, while the binding sites for coenzyme A and phosphate are found in the alpha subunit. The chain is Succinate--CoA ligase [ADP-forming] subunit beta from Xylella fastidiosa (strain 9a5c).